Here is a 50-residue protein sequence, read N- to C-terminus: DNA replication protein repEA (50 aa).

Functionally, involved in T4 DNA replication. Binds to ssDNA. The protein is DNA replication protein repEA (repEA) of Enterobacteria phage T4 (Bacteriophage T4).